Consider the following 267-residue polypeptide: MPELPEVELTRRRLERDITGKQVQQVLVRAPKLRLPVPPELEEALKGRTVRAVERRGKYLLLECEAGWLIVHLGMTGFLRLLHTPQLPGKHDHVDIVFTDGSVLRFHDPRKFGTIAWTTDSLDKHPLLAGIGPEPLTAAFSGAYLFRVSRTRRVVVKLLIMNMAIVAGVGNIYANEALFRAGIRPDRAASSLSRTECERLAVTIREVLQESIDLGSTYRVEEGTVTYHPLAFDVYGRGHGTCTSCGGALEAVRLGNRSTVFCPRCQQ.

The Schiff-base intermediate with DNA role is filled by proline 2. The active-site Proton donor is the glutamate 3. Residue lysine 58 is the Proton donor; for beta-elimination activity of the active site. 3 residues coordinate DNA: histidine 91, arginine 110, and arginine 152. The FPG-type zinc finger occupies 233 to 267 (DVYGRGHGTCTSCGGALEAVRLGNRSTVFCPRCQQ). The active-site Proton donor; for delta-elimination activity is the arginine 257.

This sequence belongs to the FPG family. Monomer. Zn(2+) is required as a cofactor.

It carries out the reaction Hydrolysis of DNA containing ring-opened 7-methylguanine residues, releasing 2,6-diamino-4-hydroxy-5-(N-methyl)formamidopyrimidine.. It catalyses the reaction 2'-deoxyribonucleotide-(2'-deoxyribose 5'-phosphate)-2'-deoxyribonucleotide-DNA = a 3'-end 2'-deoxyribonucleotide-(2,3-dehydro-2,3-deoxyribose 5'-phosphate)-DNA + a 5'-end 5'-phospho-2'-deoxyribonucleoside-DNA + H(+). Functionally, involved in base excision repair of DNA damaged by oxidation or by mutagenic agents. Acts as a DNA glycosylase that recognizes and removes damaged bases. Has a preference for oxidized purines, such as 7,8-dihydro-8-oxoguanine (8-oxoG). Has AP (apurinic/apyrimidinic) lyase activity and introduces nicks in the DNA strand. Cleaves the DNA backbone by beta-delta elimination to generate a single-strand break at the site of the removed base with both 3'- and 5'-phosphates. This chain is Formamidopyrimidine-DNA glycosylase, found in Pelobacter propionicus (strain DSM 2379 / NBRC 103807 / OttBd1).